A 130-amino-acid polypeptide reads, in one-letter code: Phosphomevalonate dehydratase small subunit (130 aa).

Ser62 functions as the Proton acceptor in the catalytic mechanism.

Belongs to the AcnX type II small subunit family. As to quaternary structure, heterodimer composed of a large subunit (PMDh-L) and a small subunit (PMDh-S).

It catalyses the reaction (R)-5-phosphomevalonate = (2E)-3-methyl-5-phosphooxypent-2-enoate + H2O. Its pathway is isoprenoid biosynthesis; isopentenyl diphosphate biosynthesis via mevalonate pathway. Functionally, component of a hydro-lyase that catalyzes the dehydration of mevalonate 5-phosphate (MVA5P) to form trans-anhydromevalonate 5-phosphate (tAHMP). Involved in the archaeal mevalonate (MVA) pathway, which provides fundamental precursors for isoprenoid biosynthesis, such as isopentenyl diphosphate (IPP) and dimethylallyl diphosphate (DMAPP). The sequence is that of Phosphomevalonate dehydratase small subunit from Thermococcus sibiricus (strain DSM 12597 / MM 739).